Reading from the N-terminus, the 409-residue chain is Putative fatty acyl-CoA reductase 7 (409 aa).

Belongs to the fatty acyl-CoA reductase family.

This Arabidopsis thaliana (Mouse-ear cress) protein is Putative fatty acyl-CoA reductase 7 (FAR7).